A 61-amino-acid polypeptide reads, in one-letter code: Small ribosomal subunit protein uS14 (61 aa).

4 residues coordinate Zn(2+): C24, C27, C40, and C43.

Belongs to the universal ribosomal protein uS14 family. Zinc-binding uS14 subfamily. As to quaternary structure, part of the 30S ribosomal subunit. Contacts proteins S3 and S10. Zn(2+) is required as a cofactor.

Its function is as follows. Binds 16S rRNA, required for the assembly of 30S particles and may also be responsible for determining the conformation of the 16S rRNA at the A site. The protein is Small ribosomal subunit protein uS14 of Clostridium botulinum (strain ATCC 19397 / Type A).